Here is a 120-residue protein sequence, read N- to C-terminus: Large ribosomal subunit protein bL20 (120 aa).

This sequence belongs to the bacterial ribosomal protein bL20 family.

In terms of biological role, binds directly to 23S ribosomal RNA and is necessary for the in vitro assembly process of the 50S ribosomal subunit. It is not involved in the protein synthesizing functions of that subunit. The sequence is that of Large ribosomal subunit protein bL20 from Baumannia cicadellinicola subsp. Homalodisca coagulata.